A 168-amino-acid polypeptide reads, in one-letter code: Transcription antitermination protein NusB (168 aa).

Belongs to the NusB family.

Involved in transcription antitermination. Required for transcription of ribosomal RNA (rRNA) genes. Binds specifically to the boxA antiterminator sequence of the ribosomal RNA (rrn) operons. In Chlamydia trachomatis serovar A (strain ATCC VR-571B / DSM 19440 / HAR-13), this protein is Transcription antitermination protein NusB.